The following is a 366-amino-acid chain: GTP-binding protein 10 (366 aa).

The Obg domain maps to 13 to 148 (GNFIDNLRIF…RIVHLDLKVI (136 aa)). In terms of domain architecture, OBG-type G spans 149–344 (ADVGLVGFPN…LKSCIRKALD (196 aa)). GTP is bound by residues 155–162 (GFPNAGKS), 202–206 (DLPGL), and 278–281 (NKMD). A compositionally biased stretch (basic and acidic residues) spans 346–355 (QDGKESDAHR). The segment at 346–366 (QDGKESDAHRSKQLLNLQSSS) is disordered.

Belongs to the TRAFAC class OBG-HflX-like GTPase superfamily. OBG GTPase family.

It localises to the nucleus. It is found in the nucleolus. May be involved in the ribosome maturation process. This chain is GTP-binding protein 10 (Gtpbp10), found in Mus musculus (Mouse).